A 61-amino-acid chain; its full sequence is Large ribosomal subunit protein eL20 (61 aa).

It belongs to the eukaryotic ribosomal protein eL20 family. Part of the 50S ribosomal subunit. Binds 23S rRNA.

This is Large ribosomal subunit protein eL20 from Methanosarcina mazei (strain ATCC BAA-159 / DSM 3647 / Goe1 / Go1 / JCM 11833 / OCM 88) (Methanosarcina frisia).